A 367-amino-acid chain; its full sequence is Palmitoyltransferase ZDHHC2 (367 aa).

The Cytoplasmic portion of the chain corresponds to 1–16; it reads MAPSGPGSSARRRCRR. The chain crosses the membrane as a helical span at residues 17–37; it reads VLYWIPVVFITLLLGWSYYAY. At 38–54 the chain is on the lumenal side; that stretch reads AIQLCIVSMENTGEQVV. The helical transmembrane segment at 55-75 threads the bilayer; it reads CLMAYHLLFAMFVWSYWKTIF. Over 76–170 the chain is Cytoplasmic; the sequence is TLPMNPSKEF…NNCVGFSNYK (95 aa). The DHHC domain maps to 127–177; it reads RYCDRCQLIKPDRCHHCSVCDKCILKMDHHCPWVNNCVGFSNYKFFLLFLA. The active-site S-palmitoyl cysteine intermediate is C157. The helical transmembrane segment at 171-191 threads the bilayer; the sequence is FFLLFLAYSLLYCLFIAATDL. The Lumenal portion of the chain corresponds to 192–208; the sequence is QYFIKFWTNGLPDTQAK. A helical transmembrane segment spans residues 209–229; sequence FHIMFLFFAAAMFSVSLSSLF. At 230–367 the chain is on the cytoplasmic side; that stretch reads GYHCWLVSKN…NPALTMENET (138 aa). The segment at 299-367 is mediates localization to plasma membrane and recycling endosomes; sequence NQDPEQASTP…NPALTMENET (69 aa). Residues 330-367 are disordered; sequence ESQSHLLTDSQSWTESSINPGKCKAGMSNPALTMENET. The segment covering 333–348 has biased composition (polar residues); sequence SHLLTDSQSWTESSIN. Residues 335 to 336 carry the Non-canonical dileucine endocytic signal motif; sequence LL. A Phosphoserine modification is found at S341. The short motif at 358 to 361 is the NPxY-like endocytic signal element; the sequence is NPAL.

The protein belongs to the DHHC palmitoyltransferase family. In terms of assembly, monomer. Homodimer. The monomeric form has a higher catalytic activity. In terms of processing, autopalmitoylated. As to expression, ubiquitously expressed. Reduced expression in colorectal cancers with liver metastasis.

Its subcellular location is the postsynaptic density. It localises to the postsynaptic recycling endosome membrane. The protein resides in the cell membrane. It is found in the endoplasmic reticulum membrane. The protein localises to the golgi apparatus membrane. It carries out the reaction L-cysteinyl-[protein] + hexadecanoyl-CoA = S-hexadecanoyl-L-cysteinyl-[protein] + CoA. It catalyses the reaction L-cysteinyl-[protein] + tetradecanoyl-CoA = S-tetradecanoyl-L-cysteinyl-[protein] + CoA. The catalysed reaction is L-cysteinyl-[protein] + octadecanoyl-CoA = S-octadecanoyl-L-cysteinyl-[protein] + CoA. Palmitoyltransferase that catalyzes the addition of palmitate onto various protein substrates and is involved in a variety of cellular processes. Has no stringent fatty acid selectivity and in addition to palmitate can also transfer onto target proteins myristate from tetradecanoyl-CoA and stearate from octadecanoyl-CoA. In the nervous system, plays a role in long term synaptic potentiation by palmitoylating AKAP5 through which it regulates protein trafficking from the dendritic recycling endosomes to the plasma membrane and controls both structural and functional plasticity at excitatory synapses. In dendrites, mediates the palmitoylation of DLG4 when synaptic activity decreases and induces synaptic clustering of DLG4 and associated AMPA-type glutamate receptors. Also mediates the de novo and turnover palmitoylation of RGS7BP, a shuttle for Gi/o-specific GTPase-activating proteins/GAPs, promoting its localization to the plasma membrane in response to the activation of G protein-coupled receptors. Through the localization of these GTPase-activating proteins/GAPs, it also probably plays a role in G protein-coupled receptors signaling in neurons. Also probably plays a role in cell adhesion by palmitoylating CD9 and CD151 to regulate their expression and function. Palmitoylates the endoplasmic reticulum protein CKAP4 and regulates its localization to the plasma membrane. Could also palmitoylate LCK and regulate its localization to the plasma membrane. In terms of biological role, (Microbial infection) Promotes Chikungunya virus (CHIKV) replication by mediating viral nsp1 palmitoylation. This chain is Palmitoyltransferase ZDHHC2, found in Homo sapiens (Human).